A 530-amino-acid chain; its full sequence is Autoinducer-2 kinase (530 aa).

The protein belongs to the FGGY kinase family.

It is found in the cytoplasm. The enzyme catalyses (S)-4,5-dihydroxypentane-2,3-dione + ATP = (2S)-2-hydroxy-3,4-dioxopentyl phosphate + ADP + H(+). Functionally, catalyzes the phosphorylation of autoinducer-2 (AI-2) to phospho-AI-2, which subsequently inactivates the transcriptional regulator LsrR and leads to the transcription of the lsr operon. Phosphorylates the ring-open form of (S)-4,5-dihydroxypentane-2,3-dione (DPD), which is the precursor to all AI-2 signaling molecules, at the C5 position. The sequence is that of Autoinducer-2 kinase from Escherichia coli O139:H28 (strain E24377A / ETEC).